We begin with the raw amino-acid sequence, 616 residues long: Chaperone protein DnaK (616 aa).

Thr175 carries the phosphothreonine; by autocatalysis modification. Residues 579–605 (GGDPSQAGGFDPNAAGGAQQAPHDDNV) form a disordered region.

This sequence belongs to the heat shock protein 70 family.

Functionally, acts as a chaperone. In Clostridium botulinum (strain Alaska E43 / Type E3), this protein is Chaperone protein DnaK.